A 318-amino-acid polypeptide reads, in one-letter code: Pheromone-regulated membrane protein 5 (318 aa).

A helical transmembrane segment spans residues Gly75–Ile98. Ser129 is modified (phosphoserine). Over residues Thr238–Leu247 the composition is skewed to low complexity. Positions Thr238–Glu318 are disordered. Basic and acidic residues predominate over residues Gly250–Lys261. Polar residues predominate over residues Ser276–Arg285. Phosphoserine is present on residues Ser279, Ser282, and Ser288. The span at His309 to Glu318 shows a compositional bias: basic and acidic residues. Lys314 participates in a covalent cross-link: Glycyl lysine isopeptide (Lys-Gly) (interchain with G-Cter in ubiquitin).

The protein belongs to the PRM5 family.

The protein localises to the membrane. This is Pheromone-regulated membrane protein 5 (PRM5) from Saccharomyces cerevisiae (strain ATCC 204508 / S288c) (Baker's yeast).